The sequence spans 388 residues: Lipid-A-disaccharide synthase (388 aa).

It belongs to the LpxB family.

It carries out the reaction a lipid X + a UDP-2-N,3-O-bis[(3R)-3-hydroxyacyl]-alpha-D-glucosamine = a lipid A disaccharide + UDP + H(+). The protein operates within bacterial outer membrane biogenesis; LPS lipid A biosynthesis. Functionally, condensation of UDP-2,3-diacylglucosamine and 2,3-diacylglucosamine-1-phosphate to form lipid A disaccharide, a precursor of lipid A, a phosphorylated glycolipid that anchors the lipopolysaccharide to the outer membrane of the cell. This is Lipid-A-disaccharide synthase from Burkholderia mallei (strain ATCC 23344).